Consider the following 509-residue polypeptide: uncharacterized protein (509 aa).

Disordered regions lie at residues Lys-112–Glu-131, Asn-152–Ser-325, Asn-365–Gly-457, and Ala-488–Gln-509. Composition is skewed to low complexity over residues Asn-116–Phe-127 and Lys-153–Thr-184. The span at Tyr-189 to Asp-217 shows a compositional bias: acidic residues. Positions Lys-228–Thr-242 are enriched in polar residues. Composition is skewed to low complexity over residues Asn-243–Ser-325 and Asn-365–Asp-397. Positions Leu-398–Gln-422 are enriched in polar residues. The span at Thr-423–Asn-442 shows a compositional bias: low complexity. 2 stretches are compositionally biased toward polar residues: residues Tyr-443 to Gly-457 and Asn-496 to Gln-509.

This is an uncharacterized protein from Dictyostelium discoideum (Social amoeba).